We begin with the raw amino-acid sequence, 83 residues long: Protein L83L (83 aa).

The segment covering 1-10 (MDTSLKNNDG) has biased composition (polar residues). The disordered stretch occupies residues 1 to 25 (MDTSLKNNDGASEADNKNYQDYKDE). The span at 14 to 25 (ADNKNYQDYKDE) shows a compositional bias: basic and acidic residues.

The protein belongs to the asfivirus L83L family. In terms of assembly, interacts with host IL1B.

It localises to the host cytoplasm. Its function is as follows. May subvert the host innate immune response by interacting with host IL1B and interfering with its function. This chain is Protein L83L, found in Ornithodoros (relapsing fever ticks).